A 326-amino-acid polypeptide reads, in one-letter code: Malate dehydrogenase (326 aa).

11 to 17 contributes to the NAD(+) binding site; the sequence is GAAGQIG. Residues Arg-92 and Arg-98 each coordinate substrate. Residues Asn-105, Gln-112, and 129–131 each bind NAD(+); that span reads VGN. Asn-131 and Arg-162 together coordinate substrate. His-187 functions as the Proton acceptor in the catalytic mechanism.

It belongs to the LDH/MDH superfamily. MDH type 2 family.

The catalysed reaction is (S)-malate + NAD(+) = oxaloacetate + NADH + H(+). Catalyzes the reversible oxidation of malate to oxaloacetate. This Alkalilimnicola ehrlichii (strain ATCC BAA-1101 / DSM 17681 / MLHE-1) protein is Malate dehydrogenase.